The chain runs to 62 residues: Large ribosomal subunit protein bL32 (62 aa).

Residues 1–16 are compositionally biased toward basic residues; sequence MAVPKRKTSPMKRGFR. The disordered stretch occupies residues 1–62; the sequence is MAVPKRKTSP…QILTPKNKEA (62 aa). Residues 28 to 44 are compositionally biased toward basic and acidic residues; the sequence is VEDKDSGELRRPHHVDL.

This sequence belongs to the bacterial ribosomal protein bL32 family.

In Methylocella silvestris (strain DSM 15510 / CIP 108128 / LMG 27833 / NCIMB 13906 / BL2), this protein is Large ribosomal subunit protein bL32.